Here is a 589-residue protein sequence, read N- to C-terminus: Putative sphingomyelin phosphodiesterase asm-3 (589 aa).

The first 17 residues, 1 to 17 (MLLGLLVLSLAFQGTLA), serve as a signal peptide directing secretion. Residues 18-101 (VTECEECKSI…LMKNDCGDFV (84 aa)) enclose the Saposin B-type domain. Cystine bridges form between Cys-21–Cys-97, Cys-24–Cys-89, and Cys-52–Cys-63. A glycan (N-linked (GlcNAc...) asparagine) is linked at Asn-109. 2 residues coordinate Zn(2+): Asp-139 and His-141. 2 disulfide bridges follow: Cys-154–Cys-159 and Cys-160–Cys-188. Position 217 (Asp-217) interacts with Zn(2+). An N-linked (GlcNAc...) asparagine glycan is attached at Asn-237. Position 257 (Asn-257) interacts with Zn(2+). Asn-334 carries N-linked (GlcNAc...) asparagine glycosylation. Positions 364, 398, and 400 each coordinate Zn(2+). Asn-463 carries N-linked (GlcNAc...) asparagine glycosylation. 2 cysteine pairs are disulfide-bonded: Cys-530–Cys-535 and Cys-541–Cys-553. A disordered region spans residues 562–589 (KPEPKKNKYSARFATSNERRRGKEECKI). The segment covering 578–589 (NERRRGKEECKI) has biased composition (basic and acidic residues).

Belongs to the acid sphingomyelinase family. Requires Zn(2+) as cofactor.

It is found in the secreted. The catalysed reaction is an N-(acyl)-sphingosylphosphocholine + H2O = an N-acyl-sphingoid base + phosphocholine + H(+). It catalyses the reaction a sphingomyelin + H2O = phosphocholine + an N-acylsphing-4-enine + H(+). It carries out the reaction an N-acyl-15-methylhexadecasphing-4-enine-1-phosphocholine + H2O = an N-acyl-15-methylhexadecasphing-4-enine + phosphocholine + H(+). It participates in lipid metabolism; sphingolipid metabolism. In terms of biological role, converts sphingomyelin to ceramide (N-acyl-sphingoid base) and phosphocholine. C.elegans contain specific sphingoid bases, which are unique or different in structure compared to the sphingoid bases found in other animals. Two examples of these distinctive compounds are: 15-methylhexadecasphinganine and 15-methylhexadecasphing-4-enine. This Caenorhabditis elegans protein is Putative sphingomyelin phosphodiesterase asm-3 (asm-3).